Here is an 856-residue protein sequence, read N- to C-terminus: MAP kinase phosphatase with leucine-rich repeats protein 3 (856 aa).

Positions 1–10 (MGNSHSSENG) are enriched in low complexity. Disordered regions lie at residues 1-24 (MGNS…GGGS), 84-195 (VKKN…SSVL), and 214-326 (DDNS…NAKD). Residue Gly-2 is the site of N-myristoyl glycine attachment. Gly residues predominate over residues 11–24 (GNSGSGGGSGGGGS). The span at 90–142 (NSSNNNSNNNSNNNNNNNTLNNSTIITTTTTTTTTSTPTTTIMITPPQQQQQQ) shows a compositional bias: low complexity. The segment covering 155–165 (ESSTPNEQQIR) has biased composition (polar residues). 2 stretches are compositionally biased toward low complexity: residues 178-195 (ESSF…SSVL) and 224-243 (QQQQ…QQTQ). 2 stretches are compositionally biased toward polar residues: residues 254 to 265 (IVNNKSSSTTNI) and 272 to 281 (AQTSRSTSIP). A compositionally biased stretch (low complexity) spans 306 to 323 (NSLSSSNIITPNNTTNTN). LRR repeat units follow at residues 344–365 (KIFS…ILSI), 370–391 (EIQE…QLVK), 392–413 (SLTT…VFIE), 416–437 (SLTS…IDQI), 439–461 (NLKY…SNLS), 462–484 (QLIS…DDLI), 485–506 (NLRM…RKLV), and 507–528 (NLVT…FAYL). The segment at 554 to 577 (NINSNNNDSNNSNNNNNNNNDNNN) is disordered. The Tyrosine-protein phosphatase domain occupies 632-773 (IPSEIIPGIF…LLKYEAKLFC (142 aa)). Cys-717 functions as the Phosphocysteine intermediate in the catalytic mechanism. Residues 810 to 856 (INNSSNSNNNNSTDNSNNSSTSTTPNLSSLSSDSSSSASLSKLSISK) form a disordered region.

Belongs to the protein-tyrosine phosphatase family. Non-receptor class dual specificity subfamily.

It catalyses the reaction O-phospho-L-tyrosyl-[protein] + H2O = L-tyrosyl-[protein] + phosphate. The enzyme catalyses O-phospho-L-seryl-[protein] + H2O = L-seryl-[protein] + phosphate. The catalysed reaction is O-phospho-L-threonyl-[protein] + H2O = L-threonyl-[protein] + phosphate. Functionally, probable phosphatase with dual specificity toward Ser/Thr and Tyr-containing proteins. The polypeptide is MAP kinase phosphatase with leucine-rich repeats protein 3 (mpl3) (Dictyostelium discoideum (Social amoeba)).